A 365-amino-acid chain; its full sequence is Glycolaldehyde reductase (365 aa).

NAD(+) is bound by residues aspartate 37, glycine 94, lysine 95, threonine 116, serine 119, serine 125, leucine 127, and tyrosine 131. Zn(2+)-binding residues include aspartate 171, histidine 254, and histidine 271.

The protein belongs to the iron-containing alcohol dehydrogenase family. Requires Zn(2+) as cofactor.

The catalysed reaction is ethylene glycol + NAD(+) = glycolaldehyde + NADH + H(+). With respect to regulation, is subject to substrate inhibition. Functionally, oxidoreductase involved in the non-carboxylating pentose bisphosphate pathway, a nucleoside degradation pathway present in some halophilic archaea. Catalyzes the reduction of glycolaldehyde to ethylene glycol. Cannot catalyze the oxidation of glycerol 1-phosphate nor the reduction of dihydroxyacetone phosphate (DHAP). The protein is Glycolaldehyde reductase of Halobacterium salinarum (strain ATCC 700922 / JCM 11081 / NRC-1) (Halobacterium halobium).